The chain runs to 158 residues: Toxin Tse2 (158 aa).

As to quaternary structure, forms a heterotetramer with Tsi2 consisting of two Tse2 dimers and two Tsi2 dimers. Formation of the complex inactivates Tse2 enzymatic activity.

The protein localises to the secreted. Toxin secreted by the H1 type VI (H1-T6SS) secretion system into the cytoplasm of recipient cells. Acts likely as a NAD-dependent cytotoxin towards both prokaryotic and eukaryotic cells. The protein is Toxin Tse2 of Pseudomonas aeruginosa (strain ATCC 15692 / DSM 22644 / CIP 104116 / JCM 14847 / LMG 12228 / 1C / PRS 101 / PAO1).